We begin with the raw amino-acid sequence, 174 residues long: 2-oxo-4-hydroxy-4-carboxy-5-ureidoimidazoline decarboxylase (174 aa).

H67 serves as the catalytic Proton donor. Substrate-binding positions include P68, 84–88 (SQEEQ), and 119–123 (FVICA). A Microbody targeting signal motif is present at residues 172 to 174 (TKL).

The protein belongs to the OHCU decarboxylase family. In terms of assembly, homodimer.

Its subcellular location is the peroxisome. The enzyme catalyses 5-hydroxy-2-oxo-4-ureido-2,5-dihydro-1H-imidazole-5-carboxylate + H(+) = (S)-allantoin + CO2. It participates in purine metabolism; urate degradation; (S)-allantoin from urate: step 3/3. Its function is as follows. Catalyzes the stereoselective decarboxylation of 2-oxo-4-hydroxy-4-carboxy-5-ureidoimidazoline (OHCU) to (S)-allantoin. The polypeptide is 2-oxo-4-hydroxy-4-carboxy-5-ureidoimidazoline decarboxylase (urad) (Danio rerio (Zebrafish)).